The primary structure comprises 598 residues: Aspartate--tRNA(Asp/Asn) ligase (598 aa).

E174 provides a ligand contact to L-aspartate. The tract at residues 198–201 (QQLK) is aspartate. Residue R220 coordinates L-aspartate. ATP-binding positions include 220–222 (RDE) and Q229. Residue H458 coordinates L-aspartate. E492 contacts ATP. Position 499 (R499) interacts with L-aspartate. Residue 544-547 (GIDR) coordinates ATP.

It belongs to the class-II aminoacyl-tRNA synthetase family. Type 1 subfamily. As to quaternary structure, homodimer.

It localises to the cytoplasm. It catalyses the reaction tRNA(Asx) + L-aspartate + ATP = L-aspartyl-tRNA(Asx) + AMP + diphosphate. In terms of biological role, aspartyl-tRNA synthetase with relaxed tRNA specificity since it is able to aspartylate not only its cognate tRNA(Asp) but also tRNA(Asn). Reaction proceeds in two steps: L-aspartate is first activated by ATP to form Asp-AMP and then transferred to the acceptor end of tRNA(Asp/Asn). The polypeptide is Aspartate--tRNA(Asp/Asn) ligase (Dehalococcoides mccartyi (strain ATCC BAA-2266 / KCTC 15142 / 195) (Dehalococcoides ethenogenes (strain 195))).